A 361-amino-acid polypeptide reads, in one-letter code: Peptide chain release factor 1 (361 aa).

Glutamine 238 is modified (N5-methylglutamine).

It belongs to the prokaryotic/mitochondrial release factor family. In terms of processing, methylated by PrmC. Methylation increases the termination efficiency of RF1.

It localises to the cytoplasm. Peptide chain release factor 1 directs the termination of translation in response to the peptide chain termination codons UAG and UAA. In Mesomycoplasma hyopneumoniae (strain J / ATCC 25934 / NCTC 10110) (Mycoplasma hyopneumoniae), this protein is Peptide chain release factor 1.